The following is an 85-amino-acid chain: MNQAIQFPDREEWDENKKCVCFPALVNGMQLTCAISGESLAYRFTGDTPEQWLASFRQHRWDLEEEAENLIQEQSEDDQGWVWLP.

This is an uncharacterized protein from Escherichia coli (strain K12).